The following is a 204-amino-acid chain: Urease accessory protein UreG (204 aa).

Residue 12–19 (GPVGSGKT) participates in GTP binding.

It belongs to the SIMIBI class G3E GTPase family. UreG subfamily. In terms of assembly, homodimer. UreD, UreF and UreG form a complex that acts as a GTP-hydrolysis-dependent molecular chaperone, activating the urease apoprotein by helping to assemble the nickel containing metallocenter of UreC. The UreE protein probably delivers the nickel.

The protein resides in the cytoplasm. In terms of biological role, facilitates the functional incorporation of the urease nickel metallocenter. This process requires GTP hydrolysis, probably effectuated by UreG. In Pseudomonas aeruginosa (strain LESB58), this protein is Urease accessory protein UreG.